We begin with the raw amino-acid sequence, 298 residues long: ADP/ATP translocase 2 (298 aa).

The residue at position 1 (M1) is an N-acetylmethionine. The Mitochondrial intermembrane portion of the chain corresponds to 1 to 7 (MTDAAVS). N-acetylthreonine; in ADP/ATP translocase 2, N-terminally processed is present on T2. A Solcar 1 repeat occupies 6–98 (VSFAKDFLAG…FAFKDKYKQI (93 aa)). S7 is subject to Phosphoserine. Residues 8-37 (FAKDFLAGGVAAAISKTAVAPIERVKLLLQ) traverse the membrane as a helical segment. K23 carries the post-translational modification N6-malonyllysine. Over 38-74 (VQHASKQITADKQYKGIMDCVVRIPKEQGVLSFWRGN) the chain is Mitochondrial matrix. The residue at position 43 (K43) is an N6-succinyllysine. K52 is modified (N6,N6,N6-trimethyllysine; alternate). K52 carries the N6,N6-dimethyllysine; alternate modification. Position 52 is an N6-methyllysine; alternate (K52). The chain crosses the membrane as a helical span at residues 75–99 (LANVIRYFPTQALNFAFKDKYKQIF). ADP contacts are provided by R80 and K92. K92 and K96 each carry N6-malonyllysine. At 100–109 (LGGVDKRTQF) the chain is on the mitochondrial intermembrane side. K105 carries the N6-acetyllysine; alternate modification. Residue K105 is modified to N6-succinyllysine; alternate. A helical transmembrane segment spans residues 110-130 (WRYFAGNLASGGAAGATSLCF). Solcar repeat units lie at residues 111–201 (RYFA…AKGM) and 212–297 (ISWM…IKKY). At 131 to 178 (VYPLDFARTRLAADVGKAGDAREFKGLGDCLVKITKSDGIRGLYQGFN) the chain is on the mitochondrial matrix side. The residue at position 147 (K147) is an N6-methyllysine; alternate. N6-acetyllysine; alternate is present on residues K147 and K155. N6-succinyllysine; alternate is present on residues K147 and K155. Position 147 is an N6-malonyllysine; alternate (K147). 2 positions are modified to N6-acetyllysine: K163 and K166. Residues 179–199 (VSVQGIIIYRAAYFGIYDTAK) traverse the membrane as a helical segment. The Mitochondrial intermembrane segment spans residues 200–210 (GMLPDPKNTHI). The helical transmembrane segment at 211 to 231 (FISWMIAQSVTAVAGLTSYPF) threads the bilayer. Over 232 to 273 (DTVRRRMMMQSGRKGSDIMYTGTIDCWKKIARDEGSKAFFKG) the chain is Mitochondrial matrix. R235 serves as a coordination point for ADP. Residues 235–240 (RRRMMM) are important for transport activity. The Nucleotide carrier signature motif motif lies at 235–240 (RRRMMM). An N6-acetyllysine; alternate modification is found at K268. K268 carries the post-translational modification N6-succinyllysine; alternate. Residues 274-291 (AWSNVLRGMGGAFVLVLY) traverse the membrane as a helical segment. Over 292 to 298 (DEIKKYT) the chain is Mitochondrial intermembrane.

Belongs to the mitochondrial carrier (TC 2.A.29) family. Monomer. Component of the MMXD complex, which includes CIAO1, ERCC2, CIAO2B, MMS19 and SLC25A5/ANT2. Interacts with AK4. Interacts with TIMM44; leading to inhibit the presequence translocase TIMM23, thereby promoting stabilization of PINK1. In terms of processing, trimethylated by ANTKMT at Lys-52.

The protein localises to the mitochondrion inner membrane. It localises to the membrane. It catalyses the reaction ADP(in) + ATP(out) = ADP(out) + ATP(in). The catalysed reaction is H(+)(in) = H(+)(out). The matrix-open state (m-state) is inhibited by the membrane-permeable bongkrekic acid (BKA). The cytoplasmic-open state (c-state) is inhibited by the membrane-impermeable toxic inhibitor carboxyatractyloside (CATR). Proton transporter activity is inhibited by ADP:ATP antiporter activity. Functionally, ADP:ATP antiporter that mediates import of ADP into the mitochondrial matrix for ATP synthesis, and export of ATP out to fuel the cell. Cycles between the cytoplasmic-open state (c-state) and the matrix-open state (m-state): operates by the alternating access mechanism with a single substrate-binding site intermittently exposed to either the cytosolic (c-state) or matrix (m-state) side of the inner mitochondrial membrane. In addition to its ADP:ATP antiporter activity, also involved in mitochondrial uncoupling and mitochondrial permeability transition pore (mPTP) activity. Plays a role in mitochondrial uncoupling by acting as a proton transporter: proton transport uncouples the proton flows via the electron transport chain and ATP synthase to reduce the efficiency of ATP production and cause mitochondrial thermogenesis. Proton transporter activity is inhibited by ADP:ATP antiporter activity, suggesting that SLC25A5/ANT2 acts as a master regulator of mitochondrial energy output by maintaining a delicate balance between ATP production (ADP:ATP antiporter activity) and thermogenesis (proton transporter activity). Proton transporter activity requires free fatty acids as cofactor, but does not transport it. Probably mediates mitochondrial uncoupling in tissues that do not express UCP1. Also plays a key role in mPTP opening, a non-specific pore that enables free passage of the mitochondrial membranes to solutes of up to 1.5 kDa, and which contributes to cell death. It is however unclear if SLC25A5/ANT2 constitutes a pore-forming component of mPTP or regulates it. Acts as a regulator of mitophagy independently of ADP:ATP antiporter activity: promotes mitophagy via interaction with TIMM44, leading to inhibit the presequence translocase TIMM23, thereby promoting stabilization of PINK1. As part of the mitotic spindle-associated MMXD complex it may play a role in chromosome segregation. This Tachyglossus aculeatus aculeatus (Southeast Australian short-beaked echidna) protein is ADP/ATP translocase 2.